The chain runs to 749 residues: Disintegrin and metalloproteinase domain-containing protein 10 (749 aa).

A signal peptide spans 1-18; sequence MGLLRLVFLLSWAASAGG. The propeptide occupies 19 to 213; that stretch reads LYGNPLNKYI…SGPVILRKKR (195 aa). The Extracellular segment spans residues 19–673; that stretch reads LYGNPLNKYI…NPELYENIAE (655 aa). The short motif at 170–177 is the Cysteine switch element; the sequence is GGCADSSV. Position 172 (cysteine 172) interacts with Zn(2+). Residues 220–457 enclose the Peptidase M12B domain; it reads NTCQLFIQTD…KENSCFVESG (238 aa). Cystine bridges form between cysteine 222–cysteine 314, cysteine 345–cysteine 452, cysteine 400–cysteine 436, cysteine 461–cysteine 496, cysteine 472–cysteine 485, cysteine 474–cysteine 480, cysteine 484–cysteine 516, cysteine 504–cysteine 512, cysteine 511–cysteine 537, cysteine 525–cysteine 544, cysteine 531–cysteine 563, cysteine 556–cysteine 568, cysteine 573–cysteine 599, cysteine 581–cysteine 608, cysteine 583–cysteine 598, cysteine 595–cysteine 640, and cysteine 633–cysteine 646. Asparagine 268 and asparagine 279 each carry an N-linked (GlcNAc...) asparagine glycan. Zn(2+) is bound at residue histidine 384. Glutamate 385 is an active-site residue. Zn(2+)-binding residues include histidine 388 and histidine 394. Asparagine 440 carries N-linked (GlcNAc...) asparagine glycosylation. The Disintegrin domain maps to 458–552; the sequence is QPICGNGLVE…QCPPSEPREN (95 aa). A glycan (N-linked (GlcNAc...) asparagine) is linked at asparagine 552. The chain crosses the membrane as a helical span at residues 674 to 694; sequence WIVAHWWAVLLMGIALIMLMA. Over 695 to 749 the chain is Cytoplasmic; the sequence is GFIKICSVHTPSSNPKLPPPKPLPGTLKRRRPPQTTQQPSRQRPRENYQMGHMRH. The tract at residues 705–749 is disordered; the sequence is PSSNPKLPPPKPLPGTLKRRRPPQTTQQPSRQRPRENYQMGHMRH. Positions 709–716 match the SH3-binding motif; it reads PKLPPPKP. Threonine 720 is modified (phosphothreonine). The SH3-binding motif lies at 723–729; sequence RRRPPQT.

The cofactor is Zn(2+). Post-translationally, the precursor is cleaved by furin and PCSK7.

Its subcellular location is the membrane. It carries out the reaction Endopeptidase of broad specificity.. Functionally, controls the proteolytic processing of Notch and mediates lateral inhibition during neurogenesis. The chain is Disintegrin and metalloproteinase domain-containing protein 10 (adam10) from Xenopus laevis (African clawed frog).